A 115-amino-acid chain; its full sequence is uncharacterized protein (115 aa).

Basic residues predominate over residues 90-100 (THFGRPATRRR). The tract at residues 90–115 (THFGRPATRRRPLGEREVNPSARSLG) is disordered.

This is an uncharacterized protein from Saccharomyces cerevisiae (strain ATCC 204508 / S288c) (Baker's yeast).